Reading from the N-terminus, the 583-residue chain is Complement factor I (583 aa).

A signal peptide spans 1–18; that stretch reads MKLLHVFLLFLCFHLSFC. 16 disulfides stabilise this stretch: Cys33–Cys255, Cys43–Cys54, Cys48–Cys59, Cys61–Cys93, Cys67–Cys86, Cys75–Cys106, Cys141–Cys181, Cys154–Cys214, Cys186–Cys196, Cys229–Cys247, Cys259–Cys271, Cys266–Cys284, Cys278–Cys293, Cys327–Cys453, Cys365–Cys381, and Cys373–Cys444. The Kazal-like domain maps to 55-108; the sequence is IEGTCICKLPYQCPKNGTTVCATNGRSFPTYCQQKSLECLRPGTKFLNNGTCTA. N-linked (GlcNAc...) asparagine glycans are attached at residues Asn70, Asn103, Asn173, and Asn177. The SRCR domain maps to 114–212; it reads VSLKHGNTDS…TMGYQDLADV (99 aa). LDL-receptor class A domains are found at residues 213-257 and 258-294; these read VCYT…LCCK and ACQG…VGCE. Residues Lys239, Asp242, Ile244, Asp246, Asp252, and Glu253 each coordinate Ca(2+). Tyr276, Asn279, Glu281, Asp283, Asp289, and Glu290 together coordinate Ca(2+). The 235-residue stretch at 340–574 folds into the Peptidase S1 domain; it reads IVGGKRAQLG…YFDWISYHVG (235 aa). Residues His380 and Asp429 each act as charge relay system in the active site. Residues Asn464 and Asn494 are each glycosylated (N-linked (GlcNAc...) asparagine). 3 disulfides stabilise this stretch: Cys467-Cys531, Cys495-Cys510, and Cys521-Cys550. The active-site Charge relay system is the Ser525. N-linked (GlcNAc...) asparagine glycosylation is present at Asn536.

The protein belongs to the peptidase S1 family. In terms of assembly, heterodimer of a light and heavy chains; disulfide-linked. The fully processed and mature protein circulates as a zymogen, and is allosterically activated by substrate-induced remodeling of the active site. As to expression, plasma.

It is found in the secreted. Its subcellular location is the extracellular space. The enzyme catalyses Inactivates complement subcomponents C3b, iC3b and C4b by proteolytic cleavage.. In terms of biological role, responsible for cleaving the alpha-chains of C4b and C3b in the presence of the cofactors C4-binding protein and factor H respectively. The chain is Complement factor I (CFI) from Pongo abelii (Sumatran orangutan).